A 201-amino-acid polypeptide reads, in one-letter code: MTNKLLSIKIADPYAEAFFQLSLSLYIKNNDPDLFYQLIFDIQDFLKLLKETPELDNFLKNPLNSNILKKNILNKIIENKFNLQTINFLNLLIDKKRIDTIQTIGKIFLEKAYEFVCIKFVEVWSTIELSQKQQENLIQKINILLGPIFSEPSVQFYKIQLTLMLDTNLLGGLIIKMGSKIIDLSLRNELQQLGKKLDITI.

Belongs to the ATPase delta chain family. As to quaternary structure, F-type ATPases have 2 components, F(1) - the catalytic core - and F(0) - the membrane proton channel. F(1) has five subunits: alpha(3), beta(3), gamma(1), delta(1), epsilon(1). CF(0) has four main subunits: a(1), b(1), b'(1) and c(10-14). The alpha and beta chains form an alternating ring which encloses part of the gamma chain. F(1) is attached to F(0) by a central stalk formed by the gamma and epsilon chains, while a peripheral stalk is formed by the delta, b and b' chains.

The protein localises to the plastid. It is found in the chloroplast thylakoid membrane. F(1)F(0) ATP synthase produces ATP from ADP in the presence of a proton or sodium gradient. F-type ATPases consist of two structural domains, F(1) containing the extramembraneous catalytic core and F(0) containing the membrane proton channel, linked together by a central stalk and a peripheral stalk. During catalysis, ATP synthesis in the catalytic domain of F(1) is coupled via a rotary mechanism of the central stalk subunits to proton translocation. Its function is as follows. This protein is part of the stalk that links CF(0) to CF(1). It either transmits conformational changes from CF(0) to CF(1) or is implicated in proton conduction. The protein is ATP synthase subunit delta, chloroplastic of Vaucheria litorea (Yellow-green alga).